A 645-amino-acid polypeptide reads, in one-letter code: 1-phosphatidylinositol 4,5-bisphosphate phosphodiesterase zeta-1 (645 aa).

One can recognise an EF-hand domain in the interval 42–77 (CHFAHVKRIFKENDRHNQGRITTEDFRTIYRCIVHR). One can recognise a PI-PLC X-box domain in the interval 162 to 306 (QDMNKPLNDY…LKFKILVKNK (145 aa)). Catalysis depends on residues His177 and His222. The region spanning 385–501 (LSDLVIYTKA…GYVLKPDFLR (117 aa)) is the PI-PLC Y-box domain. The 125-residue stretch at 501 to 625 (RDTTLGFNPN…KGYRRVPLFS (125 aa)) folds into the C2 domain.

In terms of assembly, interacts via its C2 domain with PtdIns(3)P and, to a lesser extent, PtdIns(5)P in vitro. Ca(2+) serves as cofactor.

The protein resides in the nucleus. The protein localises to the cytoplasm. It is found in the perinuclear region. The catalysed reaction is a 1,2-diacyl-sn-glycero-3-phospho-(1D-myo-inositol-4,5-bisphosphate) + H2O = 1D-myo-inositol 1,4,5-trisphosphate + a 1,2-diacyl-sn-glycerol + H(+). Its function is as follows. The production of the second messenger molecules diacylglycerol (DAG) and inositol 1,4,5-trisphosphate (IP3) is mediated by activated phosphatidylinositol-specific phospholipase C enzymes. In vitro, hydrolyzes PtdIns(4,5)P2 in a Ca(2+)-dependent manner. Triggers intracellular Ca(2+) oscillations in oocytes solely during M phase and is involved in inducing oocyte activation and initiating embryonic development up to the blastocyst stage. Is therefore a strong candidate for the egg-activating soluble sperm factor that is transferred from the sperm into the egg cytoplasm following gamete membrane fusion. May exert an inhibitory effect on phospholipase-C-coupled processes that depend on calcium ions and protein kinase C, including CFTR trafficking and function. This is 1-phosphatidylinositol 4,5-bisphosphate phosphodiesterase zeta-1 from Rattus norvegicus (Rat).